A 322-amino-acid chain; its full sequence is ADP,ATP carrier protein (322 aa).

3 Solcar repeats span residues 25 to 118, 130 to 222, and 230 to 316; these read STFF…FKKM, KWFA…LKPV, and GNFL…VQLL. 5 helical membrane passes run 27–54, 95–119, 128–148, 198–219, and 233–253; these read FFFD…VKLL, TANV…KKMF, YAKW…ASLL, FGPS…YDTL, and LASF…SYPL. ADP-binding residues include Arg-100 and Lys-112. Residue Arg-257 coordinates ADP. Positions 257-262 are important for transport activity; that stretch reads RRRMMM. A Nucleotide carrier signature motif motif is present at residues 257–262; sequence RRRMMM. A helical transmembrane segment spans residues 293–313; that stretch reads AGANILRGVAGAGVLSIYDQV.

Belongs to the mitochondrial carrier (TC 2.A.29) family. As to quaternary structure, monomer.

The protein localises to the mitochondrion inner membrane. It carries out the reaction ADP(in) + ATP(out) = ADP(out) + ATP(in). With respect to regulation, the matrix-open state (m-state) is inhibited by the membrane-permeable bongkrekic acid (BKA). The cytoplasmic-open state (c-state) is inhibited by the membrane-impermeable toxic inhibitor carboxyatractyloside (CATR). ADP:ATP antiporter that mediates import of ADP into the mitochondrial matrix for ATP synthesis, and export of ATP out to fuel the cell. Cycles between the cytoplasmic-open state (c-state) and the matrix-open state (m-state): operates by the alternating access mechanism with a single substrate-binding site intermittently exposed to either the cytosolic (c-state) or matrix (m-state) side of the inner mitochondrial membrane. The sequence is that of ADP,ATP carrier protein (anc1) from Schizosaccharomyces pombe (strain 972 / ATCC 24843) (Fission yeast).